Consider the following 150-residue polypeptide: Ribonuclease HI (150 aa).

An RNase H type-1 domain is found at 1–142; it reads MSDSVELFTD…ADQLANRGVD (142 aa). Mg(2+)-binding residues include D10, E48, D70, and D134.

The protein belongs to the RNase H family. As to quaternary structure, monomer. It depends on Mg(2+) as a cofactor.

The protein resides in the cytoplasm. It carries out the reaction Endonucleolytic cleavage to 5'-phosphomonoester.. Its function is as follows. Endonuclease that specifically degrades the RNA of RNA-DNA hybrids. This chain is Ribonuclease HI, found in Pseudomonas syringae pv. tomato (strain ATCC BAA-871 / DC3000).